Here is a 54-residue protein sequence, read N- to C-terminus: Large ribosomal subunit protein bL33 (54 aa).

The protein belongs to the bacterial ribosomal protein bL33 family.

This is Large ribosomal subunit protein bL33 from Chloroflexus aurantiacus (strain ATCC 29366 / DSM 635 / J-10-fl).